We begin with the raw amino-acid sequence, 95 residues long: Co-chaperonin GroES (95 aa).

The protein belongs to the GroES chaperonin family. Heptamer of 7 subunits arranged in a ring. Interacts with the chaperonin GroEL.

The protein localises to the cytoplasm. In terms of biological role, together with the chaperonin GroEL, plays an essential role in assisting protein folding. The GroEL-GroES system forms a nano-cage that allows encapsulation of the non-native substrate proteins and provides a physical environment optimized to promote and accelerate protein folding. GroES binds to the apical surface of the GroEL ring, thereby capping the opening of the GroEL channel. This chain is Co-chaperonin GroES, found in Staphylococcus saprophyticus subsp. saprophyticus (strain ATCC 15305 / DSM 20229 / NCIMB 8711 / NCTC 7292 / S-41).